Reading from the N-terminus, the 738-residue chain is Nucleoprotein (738 aa).

The stretch at 334 to 363 (VNVGEQYQQLREAATEAEKQLQQYAETREL) forms a coiled coil. Residues 418–640 (GDRYPDDNDI…QGSESEALPI (223 aa)) form a disordered region. The segment covering 461 to 476 (PYDDESNNYPDYEDSA) has biased composition (acidic residues). Polar residues predominate over residues 544 to 564 (PGSNTNQPQGNMSSTLQSMTP). Residues 567–594 (EESEPDDQKDDDDESLTSLDSEGDEDVE) are compositionally biased toward acidic residues. Residues 616–625 (VDTNQQNGPS) are compositionally biased toward polar residues.

The protein belongs to the filoviruses nucleoprotein family. Homooligomer. Homomultimerizes to form the nucleocapsid. Binds to viral genomic RNA. Interacts with VP35 and VP30 to form the nucleocapsid. Interacts with host PPP2R5C; this interaction leads to VP30 dephosphorylation and viral transcription. Interacts with VP24; this interaction facilitates nucleocapsid assembly and genome packaging. Interacts with matrix protein VP40; this interaction allows recruitment of the nucleocapsid into progeny virions. Interacts with host STAU1. Interacts with host NXF1 (via RNA-binding domain); this interaction recruits NXF1 to the inclusion bodies were viral replication takes place, probably to export viral mRNA-NXF1 complexes from these sites. Interacts with host CCDC92; this interaction sequesters NP in the host cytoplasm. Interacts with host TRIM14. In terms of processing, phosphorylated and O-glycosylated by host. Acetylated by host EP300 in vitro.

Its subcellular location is the virion. It is found in the host cytoplasm. In terms of biological role, oligomerizes into helical capsid to encapsidate the viral genome, protecting it from nucleases and the cellular innate immune response. VP35 binds to and stabilizes monomeric NP, keeping it soluble. Upon virus replication, NP is recruited to bind cooperatively viral genomic RNA and VP35 is released. The encapsidated genomic RNA is termed the nucleocapsid and serves as template for transcription and replication. The nucleocapsid is helical with a pitch of 10.81 NP per turn and a diameter of about 22nm. Each NP binds to six nucleotides of viral genomic RNA, three being exposed to the solvant and three hidden into the nucleocapsid. Also recruits host PPP2R5C phosphatase to dephosphorylate VP30 and thereby promote viral transcription. Upon virion assembly and budding, NP binds to VP24 and possibly host STAU1. The polypeptide is Nucleoprotein (NP) (Sudan ebolavirus (strain Human/Uganda/Gulu/2000) (SEBOV)).